The following is a 427-amino-acid chain: UDP-N-acetyl-D-mannosamine dehydrogenase (427 aa).

NAD(+)-binding residues include Y20, I21, D40, R45, T92, and T130. Residues R157, V158, K209, N213, R216, H247, R249, and G260 each contribute to the UDP-N-acetyl-alpha-D-mannosaminouronate site. The active-site Proton donor/acceptor is the K209. C263 acts as the Nucleophile in catalysis. 2 residues coordinate UDP-N-acetyl-alpha-D-mannosaminouronate: Y317 and K318. R325 provides a ligand contact to NAD(+). K403 serves as a coordination point for UDP-N-acetyl-alpha-D-mannosaminouronate.

This sequence belongs to the UDP-glucose/GDP-mannose dehydrogenase family. Homotetramer; probably dimer of dimers.

The enzyme catalyses UDP-N-acetyl-alpha-D-mannosamine + 2 NAD(+) + H2O = UDP-N-acetyl-alpha-D-mannosaminouronate + 2 NADH + 3 H(+). Its function is as follows. Catalyzes the four-electron oxidation of UDP-N-acetyl-D-mannosamine (UDP-ManNAc), reducing NAD(+) and releasing UDP-N-acetylmannosaminuronic acid (UDP-ManNAcA). The protein is UDP-N-acetyl-D-mannosamine dehydrogenase (wecC) of Methanocaldococcus jannaschii (strain ATCC 43067 / DSM 2661 / JAL-1 / JCM 10045 / NBRC 100440) (Methanococcus jannaschii).